A 432-amino-acid polypeptide reads, in one-letter code: Histidinol dehydrogenase (432 aa).

NAD(+) contacts are provided by Y133, Q194, and N217. Substrate contacts are provided by S240, Q262, and H265. Residues Q262 and H265 each coordinate Zn(2+). Catalysis depends on proton acceptor residues E330 and H331. Residues H331, D364, E418, and H423 each contribute to the substrate site. D364 contributes to the Zn(2+) binding site. Residue H423 coordinates Zn(2+).

It belongs to the histidinol dehydrogenase family. Zn(2+) is required as a cofactor.

It carries out the reaction L-histidinol + 2 NAD(+) + H2O = L-histidine + 2 NADH + 3 H(+). It functions in the pathway amino-acid biosynthesis; L-histidine biosynthesis; L-histidine from 5-phospho-alpha-D-ribose 1-diphosphate: step 9/9. In terms of biological role, catalyzes the sequential NAD-dependent oxidations of L-histidinol to L-histidinaldehyde and then to L-histidine. The sequence is that of Histidinol dehydrogenase from Nitrosomonas europaea (strain ATCC 19718 / CIP 103999 / KCTC 2705 / NBRC 14298).